The chain runs to 861 residues: Semaphorin-4D (861 aa).

The signal sequence occupies residues 1 to 23 (MRMCAPVRGLFLALVVVLRTAVA). The Sema domain occupies 24-500 (FAPVPRLTWE…SNSGVVQAPL (477 aa)). Residues 24–733 (FAPVPRLTWE…TVYLKSSDNR (710 aa)) are Extracellular-facing. N-linked (GlcNAc...) asparagine glycosylation is found at Asn-49 and Asn-77. Cystine bridges form between Cys-97–Cys-108 and Cys-126–Cys-135. N-linked (GlcNAc...) asparagine glycosylation is found at Asn-139 and Asn-191. Cystine bridges form between Cys-257–Cys-370 and Cys-281–Cys-326. Asn-379 and Asn-419 each carry an N-linked (GlcNAc...) asparagine glycan. A PSI domain is found at 502 to 551 (FCEKHGSCEDCVLARDPYCAWSPAIKACVTLHQEEASSRGWIQDMSGDTS). Cystine bridges form between Cys-503–Cys-520, Cys-509–Cys-553, Cys-512–Cys-529, and Cys-576–Cys-624. Residues 555-636 (DKSKESFNQH…EERVRNKTVS (82 aa)) enclose the Ig-like C2-type domain. 2 N-linked (GlcNAc...) asparagine glycosylation sites follow: Asn-613 and Asn-632. The segment at 649–709 (VPRTPPSPTS…KSSSGTSCEP (61 aa)) is disordered. A compositionally biased stretch (polar residues) spans 657–681 (TSEDAQTEGSKITSKMPVASTQGSS). A helical transmembrane segment spans residues 734-754 (LLMSLLLFIFVLFLCLFSYNC). Topologically, residues 755–861 (YKGYLPGQCL…KFADSDADGD (107 aa)) are cytoplasmic. Residues Ser-782 and Ser-832 each carry the phosphoserine modification. The tract at residues 793–839 (VEPGSFSQQNGDHPKPALDTGYETEQDTITSKVPTDREDSQRIDELS) is disordered. The span at 826–839 (PTDREDSQRIDELS) shows a compositional bias: basic and acidic residues.

Belongs to the semaphorin family. Homodimer. Interacts with PLXNB1. Interacts with PLXNB2. Strongly expressed in lymphoid tissues, especially in the thymus, as well as in the nervous tissues. Expressed in neurons and glia in the developing hippocampus.

The protein localises to the cell membrane. Functionally, cell surface receptor for PLXNB1 and PLXNB2 that plays an important role in cell-cell signaling. Regulates GABAergic synapse development. Promotes the development of inhibitory synapses in a PLXNB1-dependent manner. Modulates the complexity and arborization of developing neurites in hippocampal neurons by activating PLXNB1 and interaction with PLXNB1 mediates activation of RHOA. Promotes the migration of cerebellar granule cells. Plays a role in the immune system; induces B-cells to aggregate and improves their viability (in vitro). Induces endothelial cell migration through the activation of PTK2B/PYK2, SRC, and the phosphatidylinositol 3-kinase-AKT pathway. The sequence is that of Semaphorin-4D (Sema4d) from Mus musculus (Mouse).